A 328-amino-acid chain; its full sequence is Renalase (328 aa).

Residues Ala-13, 32–33, Arg-40, and 56–57 contribute to the FAD site; these read DK and QY. Substrate-binding positions include 57 to 61 and 96 to 98; these read YFTAR and SPD. Ile-128 provides a ligand contact to FAD. Residue Thr-185 coordinates substrate. Asp-302 serves as a coordination point for FAD. Arg-308 provides a ligand contact to substrate. Position 309 (Val-309) interacts with FAD.

The protein belongs to the bacterial renalase family. The cofactor is FAD.

The catalysed reaction is 1,2-dihydro-beta-NAD + O2 + H(+) = H2O2 + NAD(+). It carries out the reaction 1,2-dihydro-beta-NADP + O2 + H(+) = H2O2 + NADP(+). It catalyses the reaction 1,6-dihydro-beta-NADP + O2 + H(+) = H2O2 + NADP(+). The enzyme catalyses 1,6-dihydro-beta-NAD + O2 + H(+) = H2O2 + NAD(+). Its function is as follows. Catalyzes the oxidation of the 1,2-dihydro- and 1,6-dihydro- isomeric forms of beta-NAD(P) back to beta-NAD(P)+. Has a preference for 1,2-dihydro-beta-NAD as substrate. May serve to protect primary metabolism dehydrogenases from inhibition by the 1,2-dihydro- and 1,6-dihydro-beta-NAD(P) isomers. The polypeptide is Renalase (Pseudomonas savastanoi pv. phaseolicola (strain 1448A / Race 6) (Pseudomonas syringae pv. phaseolicola (strain 1448A / Race 6))).